Here is a 392-residue protein sequence, read N- to C-terminus: Phosphoglycerate kinase (392 aa).

Substrate contacts are provided by residues 21 to 23, Arg36, 59 to 62, Arg114, and Arg147; these read DLN and HLGR. ATP-binding positions include Lys198, Glu320, and 346 to 349; that span reads GGDT.

It belongs to the phosphoglycerate kinase family. Monomer.

The protein localises to the cytoplasm. It catalyses the reaction (2R)-3-phosphoglycerate + ATP = (2R)-3-phospho-glyceroyl phosphate + ADP. Its pathway is carbohydrate degradation; glycolysis; pyruvate from D-glyceraldehyde 3-phosphate: step 2/5. This chain is Phosphoglycerate kinase, found in Nitrosomonas eutropha (strain DSM 101675 / C91 / Nm57).